Reading from the N-terminus, the 1755-residue chain is MHSLFRKRNKGKYSPTVQTRSISNKELSDLIEQLQKNADQVERNIVDTEAKMQSDLARMQEGQLPEHRDAALQNVSDSEKLLYVLEADSAIAKHMKHPQGDMIAEDIRQLKERVTNLRGKHKQMYSLAVKEADPRVNWDTLVDEKLDKLSSQSFGTDLPLVDSQVEQHNIFHNEVKAIGPHLAKDKEQNSELQAKYQKLLTASQARQQHLSSLQDYMQRCTNELYWLDQQAKGRMQYDWSDRNLDYPSRRRQYENFINRNLEAKEERINKLHTEGDQLLTAEHPGRNSIEAHMEAVHAEWKEYLNLLICEESHLKYMEDYHQFHKDMKDAQELLRKVDSDLNQKYSPDFKDRYQIELLLRELDDQEKALDKYEDVVRGLQRRGQQVVPLKYRRETPLKPIPVEALCDFESDQGLISRGYSYTLQKNNGESWELTDSTGKKLAAPAVCFIIPPTDPEALALADSLGSQYRSVRQKATGSKHALQQRHEVLRTENPGDASDLQGRQLLAGLDKVASDLDRQEKAITGILRPPLEQGRAIEDSAERAKGLKNITNELLQIEPEKTQCTAECEAFVQALPASGTAPLLKTRVEDTNQKYERLVWLLEAAQEKVDVANRLENSLQRGRELLASYENRLIQDDTMPESGHVLDRKRQELEAMASELQAHKSLLGEVGKNLQVAKQCSSSLASRFQEHCPDLERQEAEVHKLNQRFNNLSQQVERRAQSLQSARAAYDEYCSGYNRVLQFLAKTPSYEPQETDSLGQMETKLKNQKNLLDELASREQEVQKVYADSQQYQQAVKDYELEAEKLRSLLDLENGRNSHVNKRARLQSPAAKVKEEEAALAAKFTEVNAINRQRLQNLEFALNLLRQQPEAGVTHETLQGGKLSSGMEETWKIKKELEEEIERRQQLENEVKSAQEEIQTLKDQGPQESLVRKEVLKKVPDPALEESFQQLQQTLAEEQHKNQLLQEELGALQLRLQALEQETRDGGQEYVVKEVLRIEPDRAQEDEVLQLREELEALRRQKGAREAEVLLLQQRVAALAAEKSRVQEKVTEREVVKLQNDPQLEAEYRRLQEEHQREGTLREKQEEELSFLQAKLRRLEKERAMAEGKITVKEVLKVEKDAAVEREVNDLTRQYEDEAAKARSGQREKTELLRKIWALEEENAKVVVQEKVREIVRPDPKAESEVANLRLELVEQERKFRGAEEQLKSYQSELEALRNRGPQVEVKEVTKEVIKYTTDPETEQELQRLREEIMDKTRLIERCDLEIYQLKQEIQALKDTKPQVQTREVVQEILQFQEDPQTKKEVESLRIQLSEEQKKQVDLEGERASQEEKIKRKEEELAQQRKERVVRQEVVQYEDEPDLRAEVTAFTNSIDAELRQIDKLHVELRRLQHRRAELERQLEELERERQARRAAELEVQRLQQRLAALEQEEAKTGEKVTHTQKVVLQQDPQQTREHALLRAQLEEERHRRQLLEGELEPLRRKLAALEKAEIKEKVVFSESVQVEKGDTEQEIQRLKKSLEEESQSKRELDSEVTRLEAKLSELEFYNSKSSKELDFLREENHKLQLERQNLQLETRRLQSEIEMAATETRDLKNITTIDSGTHLNSRLWSLEKELDDLKKMSKDKDLEIDELQRRLGSVAVKREQRENHLRRSIVVIDPDTGRELSPEEAHRAGLIDWKMFVKLRSQECDWEEISVKGPNGESSVIHDRKSGKKFSIEDALQSGRLTAAQYDRYVNKDMSIQELAVLVSGQK.

A compositionally biased stretch (basic residues) spans 1–11; sequence MHSLFRKRNKG. A disordered region spans residues 1 to 20; it reads MHSLFRKRNKGKYSPTVQTR. Position 14 is a phosphoserine (S14). 2 coiled-coil regions span residues 16–125 and 182–387; these read TVQT…KQMY and LAKD…QQVV. Spectrin repeat units lie at residues 214-315, 321-483, and 503-610; these read QDYM…SHLK, HQFH…HALQ, and RQLL…EKVD. One can recognise an SH3 domain in the interval 397–453; the sequence is LKPIPVEALCDFESDQGLISRGYSYTLQKNNGESWELTDSTGKKLAAPAVCFIIPPT. Position 463 is a phosphoserine (S463). Coiled-coil stretches lie at residues 611–819 and 883–1644; these read VANR…RNSH and LSSG…SVAV. S885, S947, S1583, and S1656 each carry phosphoserine. The interacts with BFSP2 and VIM stretch occupies residues 1556 to 1755; it reads ELDFLREENH…ELAVLVSGQK (200 aa). Plectin repeat units follow at residues 1650–1684 and 1699–1734; these read ENHL…WKMF and VKGP…AAQY.

This sequence belongs to the plakin or cytolinker family. As to quaternary structure, homodimer or a heterodimer with EVPL. Found in a complex composed of PPL (via C-terminal linker domain), BFSP1 and BFSP2 in the retinal lens. Within the complex interacts (via C-terminal linker domain) with BFSP2. Interacts with VIM. Binds to the PH domain of AKT1. Interacts with FCGR1A. May interact with PPHLN1. As to expression, expressed in the retinal lens (at protein level).

The protein resides in the cell junction. It localises to the desmosome. It is found in the cytoplasm. Its subcellular location is the cytoskeleton. The protein localises to the cell membrane. Functionally, component of the cornified envelope of keratinocytes. May link the cornified envelope to desmosomes and intermediate filaments. May act as a localization signal in PKB/AKT-mediated signaling. The polypeptide is Periplakin (Ppl) (Mus musculus (Mouse)).